Consider the following 91-residue polypeptide: UPF0512 protein E (91 aa).

A compositionally biased stretch (low complexity) spans 1 to 25 (MAIFKSISSISNSTSAMGSSNSTSN). The interval 1-26 (MAIFKSISSISNSTSAMGSSNSTSNR) is disordered.

It belongs to the UPF0512 family.

This chain is UPF0512 protein E, found in Dictyostelium discoideum (Social amoeba).